A 661-amino-acid polypeptide reads, in one-letter code: Pentatricopeptide repeat-containing protein At5g66631 (661 aa).

PPR repeat units lie at residues 139–173 (VHFSFMNLLNLYATAGDFDSVLKTWDEYRCSGEEK), 176–210 (CTESYNIVMQVYMTLGKDSEAVQTFDQIINEGGIP), 211–245 (NSRTFTIMIEHLVKLGNLDAAMKIFETLPLMRITR), 246–280 (TLKHYSVLVEAFVDAQRFDEVKTLIAEMKSDGKFP), 410–444 (DAYTIERMMAMLARNGQVELVDKLISKVRIEGIKL), 445–475 (PFSTIRLIIDLYGISKKPEAAIKVFNEDRTL), 484–518 (LMLLYSSLLRTLTKCKRNAEALETLEDMMLTGVSP), 519–553 (DIQTFSGLMYHFALQGEIQTVERLFSMVRQIGLEP), and 554–588 (DPYMLKLLVQAYCRCERSVLAYRVFQDMKDSNLMP).

It belongs to the PPR family. P subfamily.

In Arabidopsis thaliana (Mouse-ear cress), this protein is Pentatricopeptide repeat-containing protein At5g66631.